The primary structure comprises 892 residues: MDHYDSQQTNDYMQPEEDWDRDLLLDPAWEKQQRKTFTAWCNSHLRKAGTQIENIEEDFRDGLKLMLLLEVISGERLAKPERGKMRVHKISNVNKALDFIASKGVKLVSIGAEEIVDGNVKMTLGMIWTIILRFAIQDISVEETSAKEGLLLWCQRKTAPYKNVNIQNFHISWKDGLGFCALIHRHRPELIDYGKLRKDDPLTNLNTAFDVAEKYLDIPKMLDAEDIVGTARPDEKAIMTYVSSFYHAFSGAQKAETAANRICKVLAVNQENEQLMEDYEKLASDLLEWIRRTIPWLENRAPENTMHAMQQKLEDFRDYRRLHKPPKVQEKCQLEINFNTLQTKLRLSNRPAFMPSEGRMVSDINNAWGCLEQAEKGYEEWLLNEIRRLERLDHLAEKFRQKASIHEAWTDGKEAMLRQKDYETATLSEIKALLKKHEAFESDLAAHQDRVEQIAAIAQELNELDYYDSPSVNARCQKICDQWDNLGALTQKRREALERTEKLLETIDQLYLEYAKRAAPFNNWMEGAMEDLQDTFIVHTIEEIQGLTTAHEQFKATLPDADKERLAILGIHNEVSKIVQTYHVNMAGTNPYTTITPQEINGKWDHVRQLVPRRDQALTEEHARQQHNERLRKQFGAQANVIGPWIQTKMEEIGRISIEMHGTLEDQLNHLRQYEKSIVNYKPKIDQLEGDHQLIQEALIFDNKHTNYTMEHIRVGWEQLLTTIARTINEVENQILTRDAKGISQEQMNEFRASFNHFDRDHSGTLGPEEFKACLISLGYDIGNDPQGEAEFARIMSIVDPNRLGVVTFQAFIDFMSRETADTDTADQVMASFKILAGDKNYITVDELRRELPPDQAEYCIARMAPYTGPDAVPGALDYMSFSTALYGESDL.

An N-acetylmethionine modification is found at M1. Residues 1–247 (MDHYDSQQTN…IMTYVSSFYH (247 aa)) are actin-binding. Phosphoserine is present on S6. Y12 bears the Phosphotyrosine; by FAK1 mark. Calponin-homology (CH) domains follow at residues 31-135 (KQQR…LRFA) and 144-250 (TSAK…HAFS). 2 positions are modified to N6-acetyllysine: K95 and K195. 4 Spectrin repeats span residues 274–384 (QLME…WLLN), 394–499 (HLAE…ALER), 509–620 (QLYL…ALTE), and 630–733 (RLRK…EVEN). The tract at residues 274 to 733 (QLMEDYEKLA…IARTINEVEN (460 aa)) is interaction with DDN. The residue at position 471 (S471) is a Phosphoserine. Position 676 is an N6-acetyllysine (K676). Residue S677 is modified to Phosphoserine. EF-hand domains follow at residues 746-781 (EQMN…LGYD) and 787-822 (QGEA…ETAD). Ca(2+) is bound by residues D759, D761, S763, T765, and E770. Position 890 is a phosphoserine (S890).

The protein belongs to the alpha-actinin family. Homodimer; antiparallel. Interacts with MYOZ2, TTID and LPP. Interacts with DDN. Interacts with PSD. Interacts with MICALL2. Interacts with DNM2 and CTTN. Interacts with PDLIM1. Interacts with PDLIM2. Interacts with PDLIM4 (via PDZ domain). Interacts with IGSF8.

The protein localises to the cytoplasm. It is found in the cytoskeleton. The protein resides in the myofibril. Its subcellular location is the sarcomere. It localises to the z line. The protein localises to the cell membrane. It is found in the cell junction. The protein resides in the cell projection. Its subcellular location is the ruffle. In terms of biological role, F-actin cross-linking protein which is thought to anchor actin to a variety of intracellular structures. Association with IGSF8 regulates the immune synapse formation and is required for efficient T-cell activation. This Bos taurus (Bovine) protein is Alpha-actinin-1 (ACTN1).